The following is a 402-amino-acid chain: 4-hydroxy-3-methylbut-2-enyl diphosphate reductase (402 aa).

Cys66 lines the [4Fe-4S] cluster pocket. His96 lines the (2E)-4-hydroxy-3-methylbut-2-enyl diphosphate pocket. Dimethylallyl diphosphate is bound at residue His96. His96 contributes to the isopentenyl diphosphate binding site. Position 157 (Cys157) interacts with [4Fe-4S] cluster. His185 contacts (2E)-4-hydroxy-3-methylbut-2-enyl diphosphate. His185 provides a ligand contact to dimethylallyl diphosphate. His185 contributes to the isopentenyl diphosphate binding site. The Proton donor role is filled by Glu187. Thr250 lines the (2E)-4-hydroxy-3-methylbut-2-enyl diphosphate pocket. Cys288 serves as a coordination point for [4Fe-4S] cluster. The (2E)-4-hydroxy-3-methylbut-2-enyl diphosphate site is built by Ser317, Ser318, Asn319, and Ser379. The dimethylallyl diphosphate site is built by Ser317, Ser318, Asn319, and Ser379. Residues Ser317, Ser318, Asn319, and Ser379 each coordinate isopentenyl diphosphate.

Belongs to the IspH family. The cofactor is [4Fe-4S] cluster.

It carries out the reaction isopentenyl diphosphate + 2 oxidized [2Fe-2S]-[ferredoxin] + H2O = (2E)-4-hydroxy-3-methylbut-2-enyl diphosphate + 2 reduced [2Fe-2S]-[ferredoxin] + 2 H(+). It catalyses the reaction dimethylallyl diphosphate + 2 oxidized [2Fe-2S]-[ferredoxin] + H2O = (2E)-4-hydroxy-3-methylbut-2-enyl diphosphate + 2 reduced [2Fe-2S]-[ferredoxin] + 2 H(+). The protein operates within isoprenoid biosynthesis; dimethylallyl diphosphate biosynthesis; dimethylallyl diphosphate from (2E)-4-hydroxy-3-methylbutenyl diphosphate: step 1/1. Its pathway is isoprenoid biosynthesis; isopentenyl diphosphate biosynthesis via DXP pathway; isopentenyl diphosphate from 1-deoxy-D-xylulose 5-phosphate: step 6/6. Its function is as follows. Catalyzes the conversion of 1-hydroxy-2-methyl-2-(E)-butenyl 4-diphosphate (HMBPP) into a mixture of isopentenyl diphosphate (IPP) and dimethylallyl diphosphate (DMAPP). Acts in the terminal step of the DOXP/MEP pathway for isoprenoid precursor biosynthesis. In Trichormus variabilis (strain ATCC 29413 / PCC 7937) (Anabaena variabilis), this protein is 4-hydroxy-3-methylbut-2-enyl diphosphate reductase.